The primary structure comprises 251 residues: Zinc import ATP-binding protein ZnuC (251 aa).

Residues 5 to 220 (VSLENVSVSF…PEFISMFGPR (216 aa)) enclose the ABC transporter domain. 37–44 (GPNGAGKS) serves as a coordination point for ATP.

It belongs to the ABC transporter superfamily. Zinc importer (TC 3.A.1.15.5) family. In terms of assembly, the complex is composed of two ATP-binding proteins (ZnuC), two transmembrane proteins (ZnuB) and a solute-binding protein (ZnuA).

The protein resides in the cell inner membrane. It catalyses the reaction Zn(2+)(out) + ATP(in) + H2O(in) = Zn(2+)(in) + ADP(in) + phosphate(in) + H(+)(in). Its function is as follows. Part of the ABC transporter complex ZnuABC involved in zinc import. Responsible for energy coupling to the transport system. The protein is Zinc import ATP-binding protein ZnuC of Salmonella choleraesuis (strain SC-B67).